Consider the following 489-residue polypeptide: RNA polymerase II subunit 5-mediating protein homolog (489 aa).

Disordered stretches follow at residues 141–188 (NSDE…MDEE), 200–329 (EEKE…EEDE), 396–415 (ILKT…SYNE), and 434–489 (FENQ…RQNK). Low complexity predominate over residues 157–168 (QKSTTTTTTTTT). 2 stretches are compositionally biased toward basic and acidic residues: residues 169-188 (SKDK…MDEE) and 215-224 (FNKKFNKKLD). 3 stretches are compositionally biased toward acidic residues: residues 227-265 (GSDE…EDEK), 276-298 (EEDD…EYYD), and 315-329 (QGDD…EEDE). The segment covering 396–413 (ILKTNSSGNLMSTIPKSY) has biased composition (polar residues). The segment covering 480–489 (SRFKSSRQNK) has biased composition (basic residues).

This sequence belongs to the RNA polymerase II subunit 5-mediating protein family.

It localises to the nucleus. The sequence is that of RNA polymerase II subunit 5-mediating protein homolog (rmp) from Dictyostelium discoideum (Social amoeba).